The following is a 682-amino-acid chain: Probable methyltransferase PMT12 (682 aa).

The Cytoplasmic portion of the chain corresponds to 1–11; that stretch reads MKLFLNSNLLR. A helical; Signal-anchor for type II membrane protein transmembrane segment spans residues 12–32; the sequence is NSIFFKISAFVLISVACFFLG. At 33 to 682 the chain is on the lumenal side; that stretch reads KHWSEDGFRR…KRRKTKGKRA (650 aa). N-linked (GlcNAc...) asparagine glycosylation is found at asparagine 67, asparagine 103, asparagine 125, asparagine 155, asparagine 173, asparagine 193, asparagine 273, asparagine 350, asparagine 395, asparagine 419, asparagine 600, and asparagine 625.

The protein belongs to the methyltransferase superfamily.

It is found in the golgi apparatus membrane. The chain is Probable methyltransferase PMT12 from Arabidopsis thaliana (Mouse-ear cress).